A 142-amino-acid polypeptide reads, in one-letter code: Large ribosomal subunit protein uL11 (142 aa).

The protein belongs to the universal ribosomal protein uL11 family. In terms of assembly, part of the ribosomal stalk of the 50S ribosomal subunit. Interacts with L10 and the large rRNA to form the base of the stalk. L10 forms an elongated spine to which L12 dimers bind in a sequential fashion forming a multimeric L10(L12)X complex. In terms of processing, one or more lysine residues are methylated.

Its function is as follows. Forms part of the ribosomal stalk which helps the ribosome interact with GTP-bound translation factors. The chain is Large ribosomal subunit protein uL11 from Mycobacterium sp. (strain JLS).